Reading from the N-terminus, the 754-residue chain is Endoribonuclease Dicer-like (754 aa).

Residues 132–251 (QLMCDAKRLS…LPPELCLLLP (120 aa)) form the PAZ domain. RNase III domains are found at residues 298-418 (FAIT…TGPN) and 613-734 (AQTV…LACG). Residues Glu-336, Asp-404, Glu-407, Glu-649, Asp-720, and Glu-723 each contribute to the Mn(2+) site.

In terms of assembly, homodimer. Mg(2+) is required as a cofactor. Mn(2+) serves as cofactor.

Involved in cleaving double-stranded RNA in the RNA interference (RNAi) pathway. It produces 21 to 23 bp dsRNAs (siRNAs) which target the selective destruction of homologous RNAs. This Giardia intestinalis (strain ATCC 50803 / WB clone C6) (Giardia lamblia) protein is Endoribonuclease Dicer-like.